A 258-amino-acid polypeptide reads, in one-letter code: Ubiquinone/menaquinone biosynthesis C-methyltransferase UbiE (258 aa).

Residues threonine 81, aspartate 102, and 130 to 131 (NA) each bind S-adenosyl-L-methionine.

Belongs to the class I-like SAM-binding methyltransferase superfamily. MenG/UbiE family.

The catalysed reaction is a 2-demethylmenaquinol + S-adenosyl-L-methionine = a menaquinol + S-adenosyl-L-homocysteine + H(+). The enzyme catalyses a 2-methoxy-6-(all-trans-polyprenyl)benzene-1,4-diol + S-adenosyl-L-methionine = a 5-methoxy-2-methyl-3-(all-trans-polyprenyl)benzene-1,4-diol + S-adenosyl-L-homocysteine + H(+). It participates in quinol/quinone metabolism; menaquinone biosynthesis; menaquinol from 1,4-dihydroxy-2-naphthoate: step 2/2. The protein operates within cofactor biosynthesis; ubiquinone biosynthesis. Its function is as follows. Methyltransferase required for the conversion of demethylmenaquinol (DMKH2) to menaquinol (MKH2) and the conversion of 2-polyprenyl-6-methoxy-1,4-benzoquinol (DDMQH2) to 2-polyprenyl-3-methyl-6-methoxy-1,4-benzoquinol (DMQH2). This Rhizobium rhizogenes (strain K84 / ATCC BAA-868) (Agrobacterium radiobacter) protein is Ubiquinone/menaquinone biosynthesis C-methyltransferase UbiE.